We begin with the raw amino-acid sequence, 198 residues long: DnaJ homolog subfamily C member 12 (198 aa).

The residue at position 1 (Met1) is an N-acetylmethionine. The 66-residue stretch at 14–79 folds into the J domain; sequence DYYTLLGCDE…ESRARYDHWR (66 aa). Basic and acidic residues predominate over residues 114 to 156; that stretch reads EESDKTHTTKMENEECNEQRERKKEELASTAEKTEQKEPKPLE. Residues 114–169 are disordered; it reads EESDKTHTTKMENEECNEQRERKKEELASTAEKTEQKEPKPLEKSVSPQNSDSSGF. Phosphoserine occurs at positions 160, 166, and 182.

As to quaternary structure, interacts with HSPA8. Interacts with TPH1. Interacts with TPH2. Expressed at high levels in brain, heart, and testis, and at reduced levels in kidney and stomach.

The protein resides in the cytoplasm. In terms of biological role, probable co-chaperone that participates in the proper folding of biopterin-dependent aromatic amino acid hydroxylases, which include phenylalanine-4-hydroxylase (PAH), tyrosine 3-monooxygenase (TH) and peripheral and neuronal tryptophan hydroxylases (TPH1 and TPH2). The sequence is that of DnaJ homolog subfamily C member 12 (DNAJC12) from Homo sapiens (Human).